Consider the following 384-residue polypeptide: Branched-chain-amino-acid aminotransferase 1, mitochondrial (384 aa).

Residues 1-18 (MALRRCLPQYSTTSSYLS) constitute a mitochondrion transit peptide. The residue at position 231 (Lys231) is an N6-(pyridoxal phosphate)lysine.

It belongs to the class-IV pyridoxal-phosphate-dependent aminotransferase family. It depends on pyridoxal 5'-phosphate as a cofactor.

It localises to the mitochondrion. The enzyme catalyses L-leucine + 2-oxoglutarate = 4-methyl-2-oxopentanoate + L-glutamate. It catalyses the reaction L-isoleucine + 2-oxoglutarate = (S)-3-methyl-2-oxopentanoate + L-glutamate. It carries out the reaction L-valine + 2-oxoglutarate = 3-methyl-2-oxobutanoate + L-glutamate. The protein operates within amino-acid degradation; L-leucine degradation; 4-methyl-2-oxopentanoate from L-leucine (aminotransferase route): step 1/1. Its pathway is amino-acid degradation; L-valine degradation. Functionally, converts 2-oxo acids to branched-chain amino acids. Acts on leucine, isoleucine and valine. The polypeptide is Branched-chain-amino-acid aminotransferase 1, mitochondrial (BCAT1) (Arabidopsis thaliana (Mouse-ear cress)).